The following is a 713-amino-acid chain: NAD(+) hydrolase SARM1 (713 aa).

One copy of the ARM 1 repeat lies at 53–96; sequence DVQAVLDGSLPALRSAIRTLRSSKDTGDLEETRRAIAETFQLVE. NAD(+) contacts are provided by residues Trp-99, Arg-106, 145 to 153, and 186 to 189; these read EQILVSENR and HMFK. ARM repeat units follow at residues 110-149, 151-189, 192-231, 233-276, 277-310, 311-350, and 355-398; these read EEIC…QILV, ENRD…HMFK, EETS…NCAM, GGHR…LAAN, REME…NMLD, SADS…VETS, and QRNT…EEVP. SAM domains follow at residues 408–472 and 478–537; these read WKSG…LKTY and CDPN…ILSA. One can recognise a TIR domain in the interval 552 to 695; sequence KGPDVFISYR…KILRFLEGCP (144 aa). Residues 561–562 and Glu-591 contribute to the NAD(+) site; that span reads RR. Glu-634 is an active-site residue.

This sequence belongs to the SARM1 family. As to quaternary structure, homooctamer; forms an octameric ring via SAM domains.

The protein localises to the cytoplasm. The protein resides in the cell projection. It is found in the axon. Its subcellular location is the dendrite. It localises to the synapse. The protein localises to the mitochondrion. The catalysed reaction is NAD(+) + H2O = ADP-D-ribose + nicotinamide + H(+). It catalyses the reaction NAD(+) = cyclic ADP-beta-D-ribose + nicotinamide + H(+). It carries out the reaction NADP(+) + H2O = ADP-D-ribose 2'-phosphate + nicotinamide + H(+). With respect to regulation, autoinhibited: in the inactive state, the enzymatic TIR domain is held apart by the autoinhibiting ARM repeats. NAD(+)-binding to ARM repeats maintains an inactive state by promoting interaction between ARM repeats and the TIR domain, thereby facilitating inhibition of the enzymatic TIR domain. Following activation, possibly by nicotinamide mononucleotide (NMN), auto-inhibitory interactions are released, allowing self-association of the TIR domains and subsequent activation of the NAD(+) hydrolase (NADase) activity. Self-association of TIR domains is facilitated by the octamer of SAM domains. Functionally, NAD(+) hydrolase, which plays a key role in axonal degeneration following injury by regulating NAD(+) metabolism. Acts as a negative regulator of MYD88- and TRIF-dependent toll-like receptor signaling pathway by promoting Wallerian degeneration, an injury-induced form of programmed subcellular death which involves degeneration of an axon distal to the injury site. Wallerian degeneration is triggerred by NAD(+) depletion: in response to injury, SARM1 is activated and catalyzes cleavage of NAD(+) into ADP-D-ribose (ADPR), cyclic ADPR (cADPR) and nicotinamide; NAD(+) cleavage promoting cytoskeletal degradation and axon destruction. Also able to hydrolyze NADP(+), but not other NAD(+)-related molecules. Can activate neuronal cell death in response to stress. The sequence is that of NAD(+) hydrolase SARM1 from Danio rerio (Zebrafish).